The sequence spans 195 residues: Probable GTP-binding protein EngB (195 aa).

The EngB-type G domain maps to 22-195 (GRPEVALAGR…WAALLPFVAS (174 aa)). GTP-binding positions include 30–37 (GRSNVGKS), 57–61 (GKTQT), 75–78 (DVPG), 142–145 (TKAD), and 174–176 (FSA). Mg(2+)-binding residues include S37 and T59.

The protein belongs to the TRAFAC class TrmE-Era-EngA-EngB-Septin-like GTPase superfamily. EngB GTPase family. Mg(2+) is required as a cofactor.

Necessary for normal cell division and for the maintenance of normal septation. This is Probable GTP-binding protein EngB from Geobacillus kaustophilus (strain HTA426).